The chain runs to 371 residues: tRNA-specific 2-thiouridylase MnmA (371 aa).

ATP-binding positions include 9–16 and M35; that span reads AMSGGVDS. C109 functions as the Nucleophile in the catalytic mechanism. Cysteines 109 and 207 form a disulfide. G133 provides a ligand contact to ATP. The interval 157–159 is interaction with tRNA; it reads KDQ. The active-site Cysteine persulfide intermediate is the C207.

The protein belongs to the MnmA/TRMU family.

Its subcellular location is the cytoplasm. The enzyme catalyses S-sulfanyl-L-cysteinyl-[protein] + uridine(34) in tRNA + AH2 + ATP = 2-thiouridine(34) in tRNA + L-cysteinyl-[protein] + A + AMP + diphosphate + H(+). Catalyzes the 2-thiolation of uridine at the wobble position (U34) of tRNA, leading to the formation of s(2)U34. The polypeptide is tRNA-specific 2-thiouridylase MnmA (Solibacter usitatus (strain Ellin6076)).